Consider the following 263-residue polypeptide: Acyl-[acyl-carrier-protein]--UDP-N-acetylglucosamine O-acyltransferase (263 aa).

Belongs to the transferase hexapeptide repeat family. LpxA subfamily. Homotrimer.

The protein resides in the cytoplasm. It carries out the reaction a (3R)-hydroxyacyl-[ACP] + UDP-N-acetyl-alpha-D-glucosamine = a UDP-3-O-[(3R)-3-hydroxyacyl]-N-acetyl-alpha-D-glucosamine + holo-[ACP]. It functions in the pathway glycolipid biosynthesis; lipid IV(A) biosynthesis; lipid IV(A) from (3R)-3-hydroxytetradecanoyl-[acyl-carrier-protein] and UDP-N-acetyl-alpha-D-glucosamine: step 1/6. Its function is as follows. Involved in the biosynthesis of lipid A, a phosphorylated glycolipid that anchors the lipopolysaccharide to the outer membrane of the cell. This chain is Acyl-[acyl-carrier-protein]--UDP-N-acetylglucosamine O-acyltransferase, found in Campylobacter jejuni (strain RM1221).